Reading from the N-terminus, the 152-residue chain is Xanthine-guanine phosphoribosyltransferase (152 aa).

5-phospho-alpha-D-ribose 1-diphosphate-binding positions include 37-38 (RG), R69, and 88-96 (DDLVDTGGT). R69 is a GMP binding site. D89 provides a ligand contact to Mg(2+). D92 and I135 together coordinate guanine. Xanthine-binding residues include D92 and I135. GMP is bound by residues 92 to 96 (DTGGT) and 134 to 135 (WI).

The protein belongs to the purine/pyrimidine phosphoribosyltransferase family. XGPT subfamily. As to quaternary structure, homotetramer. Requires Mg(2+) as cofactor.

Its subcellular location is the cell inner membrane. The catalysed reaction is GMP + diphosphate = guanine + 5-phospho-alpha-D-ribose 1-diphosphate. The enzyme catalyses XMP + diphosphate = xanthine + 5-phospho-alpha-D-ribose 1-diphosphate. It carries out the reaction IMP + diphosphate = hypoxanthine + 5-phospho-alpha-D-ribose 1-diphosphate. It participates in purine metabolism; GMP biosynthesis via salvage pathway; GMP from guanine: step 1/1. Its pathway is purine metabolism; XMP biosynthesis via salvage pathway; XMP from xanthine: step 1/1. Its function is as follows. Purine salvage pathway enzyme that catalyzes the transfer of the ribosyl-5-phosphate group from 5-phospho-alpha-D-ribose 1-diphosphate (PRPP) to the N9 position of the 6-oxopurines guanine and xanthine to form the corresponding ribonucleotides GMP (guanosine 5'-monophosphate) and XMP (xanthosine 5'-monophosphate), with the release of PPi. To a lesser extent, also acts on hypoxanthine. The protein is Xanthine-guanine phosphoribosyltransferase of Erwinia tasmaniensis (strain DSM 17950 / CFBP 7177 / CIP 109463 / NCPPB 4357 / Et1/99).